The chain runs to 147 residues: UPF0178 protein IL2341 (147 aa).

This sequence belongs to the UPF0178 family.

This chain is UPF0178 protein IL2341, found in Idiomarina loihiensis (strain ATCC BAA-735 / DSM 15497 / L2-TR).